The sequence spans 186 residues: Negative modulator of initiation of replication (186 aa).

The protein belongs to the SeqA family. Homodimer. Polymerizes to form helical filaments.

It localises to the cytoplasm. In terms of biological role, negative regulator of replication initiation, which contributes to regulation of DNA replication and ensures that replication initiation occurs exactly once per chromosome per cell cycle. Binds to pairs of hemimethylated GATC sequences in the oriC region, thus preventing assembly of replication proteins and re-initiation at newly replicated origins. Repression is relieved when the region becomes fully methylated. The protein is Negative modulator of initiation of replication of Glaesserella parasuis serovar 5 (strain SH0165) (Haemophilus parasuis).